The sequence spans 956 residues: Zinc finger CCHC domain-containing protein 14 (956 aa).

Disordered stretches follow at residues 25-50, 78-99, 206-229, 243-276, 361-464, 485-505, 543-583, and 750-786; these read SSLN…PSGA, ALHT…GKHG, SSSS…KVGA, GIPS…GTGS, KEKS…EKEK, PVQN…PQLM, LEER…QGLS, and FYSG…PQPA. Positions 29 to 43 are enriched in gly residues; it reads SGGGGGGGGGGGGKS. Low complexity-rich tracts occupy residues 206-225 and 246-265; these read SSSS…PSLP and SSQS…SASL. Polar residues predominate over residues 369–389; sequence LNSSAPSLVTSSGVARVTPTS. A compositionally biased stretch (low complexity) spans 423-432; that stretch reads SSEYSSSSSS. Over residues 438-464 the composition is skewed to basic and acidic residues; it reads VREESSDSAEESDRRVDIHVEGTEKEK. Positions 750–768 are enriched in low complexity; it reads FYSGGAGSSSPGNIPASSQ. Residues 913–930 form a CCHC-type zinc finger; it reads LSCYNCGATGHRAQDCKQ.

The polypeptide is Zinc finger CCHC domain-containing protein 14 (Zcchc14) (Mus musculus (Mouse)).